A 336-amino-acid polypeptide reads, in one-letter code: Holliday junction branch migration complex subunit RuvB (336 aa).

The interval 1–182 is large ATPase domain (RuvB-L); the sequence is MKERIVNLET…FGMSFRMQFY (182 aa). ATP is bound by residues leucine 21, arginine 22, glycine 63, lysine 66, threonine 67, serine 68, 129–131, arginine 172, tyrosine 182, and arginine 219; that span reads EDF. Residue threonine 67 coordinates Mg(2+). Residues 183–253 are small ATPAse domain (RuvB-S); it reads SPSELALIIK…ITLHALNELG (71 aa). Positions 256–336 are head domain (RuvB-H); sequence ELGFDEADLA…IPTLKSQTLF (81 aa). Residues arginine 310 and arginine 315 each coordinate DNA.

This sequence belongs to the RuvB family. Homohexamer. Forms an RuvA(8)-RuvB(12)-Holliday junction (HJ) complex. HJ DNA is sandwiched between 2 RuvA tetramers; dsDNA enters through RuvA and exits via RuvB. An RuvB hexamer assembles on each DNA strand where it exits the tetramer. Each RuvB hexamer is contacted by two RuvA subunits (via domain III) on 2 adjacent RuvB subunits; this complex drives branch migration. In the full resolvosome a probable DNA-RuvA(4)-RuvB(12)-RuvC(2) complex forms which resolves the HJ.

Its subcellular location is the cytoplasm. The enzyme catalyses ATP + H2O = ADP + phosphate + H(+). Functionally, the RuvA-RuvB-RuvC complex processes Holliday junction (HJ) DNA during genetic recombination and DNA repair, while the RuvA-RuvB complex plays an important role in the rescue of blocked DNA replication forks via replication fork reversal (RFR). RuvA specifically binds to HJ cruciform DNA, conferring on it an open structure. The RuvB hexamer acts as an ATP-dependent pump, pulling dsDNA into and through the RuvAB complex. RuvB forms 2 homohexamers on either side of HJ DNA bound by 1 or 2 RuvA tetramers; 4 subunits per hexamer contact DNA at a time. Coordinated motions by a converter formed by DNA-disengaged RuvB subunits stimulates ATP hydrolysis and nucleotide exchange. Immobilization of the converter enables RuvB to convert the ATP-contained energy into a lever motion, pulling 2 nucleotides of DNA out of the RuvA tetramer per ATP hydrolyzed, thus driving DNA branch migration. The RuvB motors rotate together with the DNA substrate, which together with the progressing nucleotide cycle form the mechanistic basis for DNA recombination by continuous HJ branch migration. Branch migration allows RuvC to scan DNA until it finds its consensus sequence, where it cleaves and resolves cruciform DNA. The sequence is that of Holliday junction branch migration complex subunit RuvB from Helicobacter pylori (strain G27).